The primary structure comprises 279 residues: Bis(5'-nucleosyl)-tetraphosphatase, symmetrical (279 aa).

It belongs to the Ap4A hydrolase family.

The enzyme catalyses P(1),P(4)-bis(5'-adenosyl) tetraphosphate + H2O = 2 ADP + 2 H(+). Its function is as follows. Hydrolyzes diadenosine 5',5'''-P1,P4-tetraphosphate to yield ADP. The sequence is that of Bis(5'-nucleosyl)-tetraphosphatase, symmetrical from Edwardsiella ictaluri (strain 93-146).